Here is a 794-residue protein sequence, read N- to C-terminus: MNIDDKLEGLFLKCGGIDEMQSSRAMVVMGGVSGQSAVSGELQESVLQDRSLPHQEILAADEVLQESEMRQQDMISHDELMVHEETVKNDEEQMDTHERLPQGLQYALNVPISVKQEITFTDVSEQLMRDKKQVREPVDLQKKKKRKQRSPAKILTINEDGSLGLKTPKSHVCEHCNAAFRTNYHLQRHVFIHTGEKPFQCSQCDMRFIQKYLLQRHEKIHTGEKPFRCDECGMRFIQKYHMERHKRTHSGEKPYQCEYCLQYFSRTDRVLKHKRMCHENHDKKLNRCAIKGGLLTSEEDSGFSTSPKDNSLPKKKRQKTEKKSSGMDKESVLDKSDLKKDKNDYLPLYSSSTKVKDEYMVAEYAVEMPHSSVGGSHLEDASGEIHPPKLVLKKINSKRSLKQPLEQSQTISPLSSYEDSKVSKYAFELVDKQALLDSEGSADIDQVDNLQEGPSKPVHSSTNYDDAMQFLKKKRYLQAASNNSREYALNVGTIASQPSVTQAAVASVIDESTTASILDSQALNVEIKSNHDKNVIPDEVLQTLLDHYSHKPNGQHEISFSVADTEVTSSISINSSDVPEVTQSENVGSSSQASSSDKANMLQEYSKFLQQALDRTSQNDAYLNSPSLNFVTDNQTLPNPPAFSSIDKQVYAAMPINSFRSGMNSPLRTTPDKSHFGLIVGDSQHPFPFSGDETNHASATSTADFLDQVTSQKKAEAQPVHQAYQMSSFEQPFRAPYHGSRAGIATQFSTANGQVNLRGPGTSAEFSEFPLVNVNDNRAGMTSSPDATTGQTFG.

A Glycyl lysine isopeptide (Lys-Gly) (interchain with G-Cter in SUMO2) cross-link involves residue Lys-6. Ser-51 is subject to Phosphoserine. Residues Lys-88, Lys-115, and Lys-132 each participate in a glycyl lysine isopeptide (Lys-Gly) (interchain with G-Cter in SUMO2) cross-link. The C2H2-type 1 zinc finger occupies 171–193; the sequence is HVCEHCNAAFRTNYHLQRHVFIH. Thr-194 carries the post-translational modification Phosphothreonine. C2H2-type zinc fingers lie at residues 199–221 and 227–249; these read FQCS…EKIH and FRCD…KRTH. Ser-250 carries the phosphoserine modification. A C2H2-type 4 zinc finger spans residues 255–278; the sequence is YQCEYCLQYFSRTDRVLKHKRMCH. Residue Lys-291 forms a Glycyl lysine isopeptide (Lys-Gly) (interchain with G-Cter in SUMO2) linkage. Residues 298–336 are disordered; that stretch reads EEDSGFSTSPKDNSLPKKKRQKTEKKSSGMDKESVLDKS. Phosphoserine is present on residues Ser-301 and Ser-306. Lys-308 is covalently cross-linked (Glycyl lysine isopeptide (Lys-Gly) (interchain with G-Cter in SUMO2)). The span at 321 to 336 shows a compositional bias: basic and acidic residues; that stretch reads EKKSSGMDKESVLDKS. Lys-356 participates in a covalent cross-link: Glycyl lysine isopeptide (Lys-Gly) (interchain with G-Cter in SUMO1); alternate. Residue Lys-356 forms a Glycyl lysine isopeptide (Lys-Gly) (interchain with G-Cter in SUMO2); alternate linkage. Residue Lys-402 forms a Glycyl lysine isopeptide (Lys-Gly) (interchain with G-Cter in SUMO2) linkage. The residue at position 412 (Ser-412) is a Phosphoserine. Glycyl lysine isopeptide (Lys-Gly) (interchain with G-Cter in SUMO2) cross-links involve residues Lys-421 and Lys-424. Over residues 574–588 the composition is skewed to polar residues; the sequence is NSSDVPEVTQSENVG. The interval 574-599 is disordered; it reads NSSDVPEVTQSENVGSSSQASSSDKA. At Lys-607 the chain carries N6-acetyllysine. A phosphoserine mark is found at Ser-665 and Ser-784.

This sequence belongs to the krueppel C2H2-type zinc-finger protein family. Interacts with HNRNPDL. Interacts with the 5FMC complex; the interaction requires association with CHTOP. Interacts with CAVIN1. Post-translationally, sumoylated with SUMO2. Desumoylated by SENP3, resulting in the stimulation of transcription of its target genes. Strong expression detected in brain, lung, liver and kidney, with lower levels detected in spleen, skeletal muscle, testis and heart.

It localises to the nucleus. Functionally, involved in transcriptional regulation. Represses the transcription of a number of genes including gastrin, stromelysin and enolase. Binds to the G-rich box in the enhancer region of these genes. This Mus musculus (Mouse) protein is Zinc finger protein 148 (Znf148).